Here is a 382-residue protein sequence, read N- to C-terminus: MPYFDYASTKPVDERVVEAMLPYMTEHFGNPSSVHSYGFKAREVIEEARGKISELINGGGGDIVFTSGATESNNLALIGYAMRNARKGKHVLVSSIEHMSVINPAKYLQKQGFEVEFIPVDKYGTVDLEFIEEKIREDTILVSVQHANNEIGTIQPIKEISEIINGRAALHVDATASLGQIEVDVEKIGADMLTISSNDIYGPKGVGALWVRQGVRLQPIILGGGQEKGLRSGSENVPAIVGFGKAAEITAKEWGEEAGRLRRLRDRIIDNVLKIEESYLNGHPEKRLPNNVNVRFSYIEGESIVLSLDMAGIQASTGSACSSKTLQPSHVLMACGLKHEEAHGTLLLTLGRYNTDEDVDRLLEVLPGVIERLRSMSPLYRR.

Residue asparagine 149 participates in pyridoxal 5'-phosphate binding. Catalysis depends on cysteine 321, which acts as the Cysteine persulfide intermediate. Cysteine 321 is a binding site for [2Fe-2S] cluster.

The protein belongs to the class-V pyridoxal-phosphate-dependent aminotransferase family. NifS/IscS subfamily. Homodimer. Forms a heterotetramer with IscU, interacts with other sulfur acceptors. Requires pyridoxal 5'-phosphate as cofactor.

It localises to the cytoplasm. It carries out the reaction (sulfur carrier)-H + L-cysteine = (sulfur carrier)-SH + L-alanine. It participates in cofactor biosynthesis; iron-sulfur cluster biosynthesis. Its function is as follows. Master enzyme that delivers sulfur to a number of partners involved in Fe-S cluster assembly, tRNA modification or cofactor biosynthesis. Catalyzes the removal of elemental sulfur atoms from cysteine to produce alanine. Functions as a sulfur delivery protein for Fe-S cluster synthesis onto IscU, an Fe-S scaffold assembly protein, as well as other S acceptor proteins. This chain is Cysteine desulfurase IscS 1, found in Archaeoglobus fulgidus (strain ATCC 49558 / DSM 4304 / JCM 9628 / NBRC 100126 / VC-16).